Here is a 194-residue protein sequence, read N- to C-terminus: Imidazoleglycerol-phosphate dehydratase (194 aa).

The protein belongs to the imidazoleglycerol-phosphate dehydratase family.

Its subcellular location is the cytoplasm. It catalyses the reaction D-erythro-1-(imidazol-4-yl)glycerol 3-phosphate = 3-(imidazol-4-yl)-2-oxopropyl phosphate + H2O. Its pathway is amino-acid biosynthesis; L-histidine biosynthesis; L-histidine from 5-phospho-alpha-D-ribose 1-diphosphate: step 6/9. The chain is Imidazoleglycerol-phosphate dehydratase from Chlorobaculum parvum (strain DSM 263 / NCIMB 8327) (Chlorobium vibrioforme subsp. thiosulfatophilum).